We begin with the raw amino-acid sequence, 153 residues long: Cytochrome c-type biogenesis protein CcmE (153 aa).

Residues methionine 1–arginine 6 are Cytoplasmic-facing. A helical; Signal-anchor for type II membrane protein transmembrane segment spans residues leucine 7–alanine 27. The Periplasmic segment spans residues leucine 28–proline 153. 2 residues coordinate heme: histidine 121 and tyrosine 125. Positions leucine 130 to histidine 141 are enriched in polar residues. Residues leucine 130 to proline 153 are disordered.

This sequence belongs to the CcmE/CycJ family.

The protein localises to the cell inner membrane. In terms of biological role, heme chaperone required for the biogenesis of c-type cytochromes. Transiently binds heme delivered by CcmC and transfers the heme to apo-cytochromes in a process facilitated by CcmF and CcmH. The chain is Cytochrome c-type biogenesis protein CcmE from Xylella fastidiosa (strain 9a5c).